A 295-amino-acid chain; its full sequence is Small ribosomal subunit protein uS2 (295 aa).

N-acetylserine is present on Ser2. A Phosphoserine modification is found at Ser43. Lys52 is subject to N6-acetyllysine. The interval Thr54–Gln113 is interaction with PPP1R16B. Lys89 carries the post-translational modification N6-acetyllysine; alternate. A Glycyl lysine isopeptide (Lys-Gly) (interchain with G-Cter in SUMO2); alternate cross-link involves residue Lys89. Thr97 is modified (phosphothreonine). Laminin-binding stretches follow at residues Ile161–Arg180 and Arg205–Gly229. 5 [DE]-W-[ST] repeats span residues Glu230–Thr232, Asp247–Ser249, Asp266–Ser268, Asp275–Ser277, and Glu293–Ser295. Positions Gln242 to Ser295 are laminin-binding. The tract at residues Asp266–Ser295 is disordered.

Belongs to the universal ribosomal protein uS2 family. In terms of assembly, monomer (37LRP) and homodimer (67LR). Component of the small ribosomal subunit. Mature ribosomes consist of a small (40S) and a large (60S) subunit. The 40S subunit contains about 33 different proteins and 1 molecule of RNA (18S). The 60S subunit contains about 49 different proteins and 3 molecules of RNA (28S, 5.8S and 5S). Interacts with RPS21. Interacts with several laminins including at least LAMB1. Interacts with MDK. The mature dimeric form interacts with PPP1R16B (via its fourth ankyrin repeat). Interacts with PPP1CA only in the presence of PPP1R16B. Post-translationally, acylated. Acylation may be a prerequisite for conversion of the monomeric 37 kDa laminin receptor precursor (37LRP) to the mature dimeric 67 kDa laminin receptor (67LR), and may provide a mechanism for membrane association. In terms of processing, cleaved by stromelysin-3 (ST3) at the cell surface. Cleavage by stromelysin-3 may be a mechanism to alter cell-extracellular matrix interactions. In terms of tissue distribution, expressed in most neurons and in a subset of glial cells. The overall distribution of LR correlates with that reported for laminin-1 but also with brain regions classically associated with prion-related neurodegeneration.

Its subcellular location is the cell membrane. The protein resides in the cytoplasm. It localises to the nucleus. Functionally, required for the assembly and/or stability of the 40S ribosomal subunit. Required for the processing of the 20S rRNA-precursor to mature 18S rRNA in a late step of the maturation of 40S ribosomal subunits. Also functions as a cell surface receptor for laminin. Plays a role in cell adhesion to the basement membrane and in the consequent activation of signaling transduction pathways. May play a role in cell fate determination and tissue morphogenesis. Also acts as a receptor for several other ligands, including the pathogenic prion protein, viruses, and bacteria. Acts as a PPP1R16B-dependent substrate of PPP1CA. The polypeptide is Small ribosomal subunit protein uS2 (Rpsa) (Rattus norvegicus (Rat)).